The primary structure comprises 425 residues: Glutamate-1-semialdehyde 2,1-aminomutase (425 aa).

Lys-265 bears the N6-(pyridoxal phosphate)lysine mark.

It belongs to the class-III pyridoxal-phosphate-dependent aminotransferase family. HemL subfamily. In terms of assembly, homodimer. Pyridoxal 5'-phosphate is required as a cofactor.

It is found in the cytoplasm. It carries out the reaction (S)-4-amino-5-oxopentanoate = 5-aminolevulinate. It participates in porphyrin-containing compound metabolism; protoporphyrin-IX biosynthesis; 5-aminolevulinate from L-glutamyl-tRNA(Glu): step 2/2. The protein is Glutamate-1-semialdehyde 2,1-aminomutase of Clostridium perfringens (strain ATCC 13124 / DSM 756 / JCM 1290 / NCIMB 6125 / NCTC 8237 / Type A).